We begin with the raw amino-acid sequence, 444 residues long: C4-dicarboxylate transport protein (444 aa).

The next 9 membrane-spanning stretches (helical) occupy residues 21–41, 57–77, 92–112, 161–181, 201–221, 234–254, 320–340, 345–365, and 368–388; these read HLYV…HFYP, LVKM…IAGM, IYFL…ANVV, GDIL…ALVG, LVSI…AFTI, LLIG…LGAV, IYMT…LSLS, LLLV…AGFI, and AATL…ILGI.

This sequence belongs to the dicarboxylate/amino acid:cation symporter (DAACS) (TC 2.A.23) family.

Its subcellular location is the cell inner membrane. Responsible for the transport of dicarboxylates such as succinate, fumarate, and malate from the periplasm across the membrane. The protein is C4-dicarboxylate transport protein of Brucella anthropi (strain ATCC 49188 / DSM 6882 / CCUG 24695 / JCM 21032 / LMG 3331 / NBRC 15819 / NCTC 12168 / Alc 37) (Ochrobactrum anthropi).